A 20-amino-acid polypeptide reads, in one-letter code: KEEAKVLGTVIGIDLGTQYL.

Belongs to the heat shock protein 70 family.

The protein localises to the endoplasmic reticulum lumen. Probably plays a role in facilitating the assembly of multimeric protein complexes inside the ER. The chain is Luminal-binding protein from Phaseolus vulgaris (Kidney bean).